The following is a 675-amino-acid chain: Transmembrane protein 232 (675 aa).

Residues 163 to 183 (LVKIGYLIFLRLFVFFLHGHL) form a helical membrane-spanning segment. Residues 598–634 (WQKDMEARKREEEAYKAQNQKDKEEKEKIHFQEIMKQ) are a coiled coil. Residues 605–624 (RKREEEAYKAQNQKDKEEKE) form a disordered region.

High expression in the testis and weak expression levels in the spleen, liver, brain, uterus, lung, epididymis and kidney. Not detected in the heart or ovary.

The protein localises to the membrane. Its function is as follows. Plays a critical role for male fertility and sperm motility by regulating sperm cytoplasm removal and maintaining axoneme integrity. This chain is Transmembrane protein 232 (Tmem232), found in Mus musculus (Mouse).